The chain runs to 390 residues: Lipid-A-disaccharide synthase (390 aa).

It belongs to the LpxB family.

It carries out the reaction a lipid X + a UDP-2-N,3-O-bis[(3R)-3-hydroxyacyl]-alpha-D-glucosamine = a lipid A disaccharide + UDP + H(+). It participates in bacterial outer membrane biogenesis; LPS lipid A biosynthesis. Functionally, condensation of UDP-2,3-diacylglucosamine and 2,3-diacylglucosamine-1-phosphate to form lipid A disaccharide, a precursor of lipid A, a phosphorylated glycolipid that anchors the lipopolysaccharide to the outer membrane of the cell. This Neisseria gonorrhoeae (strain ATCC 700825 / FA 1090) protein is Lipid-A-disaccharide synthase.